We begin with the raw amino-acid sequence, 460 residues long: Alpha-amylase (460 aa).

The N-terminal stretch at 1–21 (MASRTLSGALALAAAATAVLA) is a signal peptide. Ca(2+) is bound by residues Asn-121, Gln-167, and Asp-176. Catalysis depends on Asp-206, which acts as the Nucleophile. A Ca(2+)-binding site is contributed by His-210. The active-site Proton donor is Glu-233.

It belongs to the glycosyl hydrolase 13 family. As to quaternary structure, monomer. It depends on Ca(2+) as a cofactor.

It carries out the reaction Endohydrolysis of (1-&gt;4)-alpha-D-glucosidic linkages in polysaccharides containing three or more (1-&gt;4)-alpha-linked D-glucose units.. The chain is Alpha-amylase (amy) from Streptomyces thermoviolaceus.